The chain runs to 388 residues: Probable proton-coupled zinc antiporter SLC30A3 (388 aa).

The interval 1 to 46 is disordered; it reads MEPSPAAGGLETTRLVSPRDRGGAGGSLRLKSLFTEPSEPLPEESK. At 1-75 the chain is on the cytoplasmic side; it reads MEPSPAAGGL…TPERLHARRQ (75 aa). Residues 76–96 traverse the membrane as a helical segment; the sequence is LYAACAVCFVFMAGEVVGGYL. Residues 97-105 are Lumenal-facing; sequence AHSLAIMTD. Residues 106–126 traverse the membrane as a helical segment; sequence AAHLLADVGSMMGSLFSLWLS. Zn(2+) is bound by residues His-108 and Asp-112. Over 127–145 the chain is Cytoplasmic; sequence TRPATRTMTFGWHRSETLG. The helical transmembrane segment at 146 to 166 threads the bilayer; that stretch reads ALASVVSLWMVTGILLYLAFV. Over 167–177 the chain is Lumenal; it reads RLLHSDYHIEG. Residues 178-198 form a helical membrane-spanning segment; it reads GAMLLTASIAVCANLLMAFVL. The Cytoplasmic segment spans residues 199 to 235; sequence HQAGPPHSHGSRGAEYAPLEEGPEEPLPLGNTSVRAA. Residues 236–256 traverse the membrane as a helical segment; the sequence is FVHVLGDLLQSFGVLAASILI. His-238 and Asp-242 together coordinate Zn(2+). Topologically, residues 257–264 are lumenal; the sequence is YFKPQYKA. Residues 265-285 form a helical membrane-spanning segment; sequence ADPISTFLFSICALGSTAPTL. The Cytoplasmic segment spans residues 286–388; the sequence is RDVLRILMEG…CLRCQEPPQA (103 aa). A Dityrosine (Tyr-Tyr) (interchain with Y-372) cross-link involves residue Tyr-357. A Dityrosine (Tyr-Tyr) (interchain with Y-357) cross-link involves residue Tyr-372.

This sequence belongs to the cation diffusion facilitator (CDF) transporter (TC 2.A.4) family. SLC30A subfamily. Homodimer; dityrosine-linked. Homodimerization seems specific of the human protein and enhances the zinc transport efficiency. Interacts with TMEM163. In terms of processing, homodimerization through dityrosine bonds is stimulated by oxidative stress.

The protein localises to the cytoplasmic vesicle. Its subcellular location is the secretory vesicle. It is found in the synaptic vesicle membrane. It localises to the synapse. The protein resides in the synaptosome. The protein localises to the late endosome membrane. Its subcellular location is the lysosome membrane. The enzyme catalyses Zn(2+)(in) + 2 H(+)(out) = Zn(2+)(out) + 2 H(+)(in). Probable proton-coupled zinc ion antiporter mediating the import of zinc from cytoplasm into synaptic vesicles and participating to cellular zinc ion homeostasis in the brain. This is Probable proton-coupled zinc antiporter SLC30A3 from Homo sapiens (Human).